Reading from the N-terminus, the 64-residue chain is DNA-binding protein 7b (64 aa).

N6-methyllysine occurs at positions 5 and 7.

The protein belongs to the 7 kDa DNA-binding/endoribonuclease P2 family. Monomer. In terms of processing, lys-5 and Lys-7 may be methylated.

Its subcellular location is the cytoplasm. Can constrain negative DNA supercoils. May be involved in maintaining the integrity of the genome at high temperature. In Saccharolobus shibatae (strain ATCC 51178 / DSM 5389 / JCM 8931 / NBRC 15437 / B12) (Sulfolobus shibatae), this protein is DNA-binding protein 7b.